Consider the following 181-residue polypeptide: ATP synthase subunit delta (181 aa).

Belongs to the ATPase delta chain family. As to quaternary structure, F-type ATPases have 2 components, F(1) - the catalytic core - and F(0) - the membrane proton channel. F(1) has five subunits: alpha(3), beta(3), gamma(1), delta(1), epsilon(1). F(0) has three main subunits: a(1), b(2) and c(10-14). The alpha and beta chains form an alternating ring which encloses part of the gamma chain. F(1) is attached to F(0) by a central stalk formed by the gamma and epsilon chains, while a peripheral stalk is formed by the delta and b chains.

The protein localises to the cell inner membrane. Its function is as follows. F(1)F(0) ATP synthase produces ATP from ADP in the presence of a proton or sodium gradient. F-type ATPases consist of two structural domains, F(1) containing the extramembraneous catalytic core and F(0) containing the membrane proton channel, linked together by a central stalk and a peripheral stalk. During catalysis, ATP synthesis in the catalytic domain of F(1) is coupled via a rotary mechanism of the central stalk subunits to proton translocation. Functionally, this protein is part of the stalk that links CF(0) to CF(1). It either transmits conformational changes from CF(0) to CF(1) or is implicated in proton conduction. The chain is ATP synthase subunit delta from Aquifex aeolicus (strain VF5).